A 352-amino-acid polypeptide reads, in one-letter code: MTLFNFIKLFKKAHEENVKQADLEKKKAMKQIDLRRANDTEIMLTKVNIPLADMMAAVLGMDEYVLDVDQIENLIRFCPTKEEMELLKNYTGDKATLGKCEQYFLEVMKVPGVESKLRAFSFKIQFGTQIAELNKGLNAVNSACEEVRTSEKLKEIMANILCMGNILNQGTAEGSAVGFKLKSLLILSDTCAPNSKMTLMHYLCKVLASKASDLLDFHKDLESLESASKIQLKSLAEEIQAITKGLEKLNKQLTASESDGPVSQVFRKVLKDFISMAETQVATVSSLYSSGKNADALAHYFGEDPNHYPFEKVTTTLLSFIRLFKKAHEENVKQADLDKNKDAKEAEMEKTK.

One can recognise an FH2 domain in the interval 1–350 (MTLFNFIKLF…KDAKEAEMEK (350 aa)).

It belongs to the formin-like family. Class-II subfamily.

This chain is Putative formin-like protein 15b (FH15B), found in Arabidopsis thaliana (Mouse-ear cress).